The following is a 569-amino-acid chain: Cell death protein 4 (569 aa).

The CARD domain occupies 1–91 (MLCEIECRAL…HLKDFLDEYL (91 aa)). The NB-ARC domain maps to 116 to 442 (DRKLLLGNVP…IWSCVIPVDI (327 aa)). Residues Phe-131, 162-167 (GSGKSV), and Gln-171 contribute to the ATP site. Ser-166 is a binding site for Mg(2+).

Associates as an asymmetric homodimer with ced-9. Upon release from ced-9, forms an octamer, known as the apoptosome, and interacts with ced-3; the interaction results in ced-3 autoproteolytic cleavage and activation. The octamer (a tetramer of an asymmetric dimer) also interacts with two processed ced-3 to form a stable holoenzyme. Interacts with sex-determining protein fem-1. May form a complex composed of ced-3, ced-4 and mac-1 or of ced-9, ced-4 and mac-1. Within the complex, interacts with ced-4.

Its subcellular location is the mitochondrion. The protein resides in the cytoplasm. It is found in the perinuclear region. Plays a major role in programmed cell death (PCD, apoptosis). egl-1 binds to and directly inhibits the activity of ced-9, releasing the cell death activator ced-4 from a ced-9/ced-4 containing protein complex and allowing ced-4 to induce caspase ced-3 autoproteolytic cleavage and activation. Also forms a holoenzyme with processed ced-3 enhancing ced-3 activity. Component of the egl-1, ced-9, ced-4 and ced-3 apoptotic signaling cascade required for the initiation of programmed cell death in cells fated to die during embryonic and postembryonic development. During oogenesis, required for germline apoptosis downstream of ced-9 and upstream of ced-3 but independently of egl-1. May regulate germline apoptosis in response to DNA damage, probably downstream of let-60/ras and mpk-1 pathway. Regulates CEP neuron apoptosis in response to high Al(3+) levels. During male tail morphogenesis, promotes apoptosis of the tail-spike cell. During larval development, required for the elimination of transient presynaptic components downstream of egl-1 and ced-9 and upstream of ced-3 apoptotic pathway. Together with ain-1, a component of the miRNA-induced-silencing complex (miRISC), and probably upstream of ced-3, regulates temporal cell fate patterning during larval development. May play a role in resistance to S.typhimurium-mediated infection. The protein is Cell death protein 4 of Caenorhabditis briggsae.